The sequence spans 177 residues: Putative adenylate kinase (177 aa).

5 residues coordinate ATP: Gly-10, Gly-12, Lys-13, Thr-14, and Thr-15. Residues Ser-30–Val-50 form an NMP region. An LID region spans residues Glu-99–Glu-109. ATP is bound by residues Arg-100 and Lys-138.

This sequence belongs to the adenylate kinase family. AK6 subfamily. Interacts with uS11. Not a structural component of 40S pre-ribosomes, but transiently interacts with them by binding to uS11.

It carries out the reaction AMP + ATP = 2 ADP. It catalyses the reaction ATP + H2O = ADP + phosphate + H(+). In terms of biological role, broad-specificity nucleoside monophosphate (NMP) kinase that catalyzes the reversible transfer of the terminal phosphate group between nucleoside triphosphates and monophosphates. Also has ATPase activity. Involved in the late maturation steps of the 30S ribosomal particles, specifically 16S rRNA maturation. While NMP activity is not required for ribosome maturation, ATPase activity is. Associates transiently with small ribosomal subunit protein uS11. ATP hydrolysis breaks the interaction with uS11. May temporarily remove uS11 from the ribosome to enable a conformational change of the ribosomal RNA that is needed for the final maturation step of the small ribosomal subunit. This chain is Putative adenylate kinase, found in Thermococcus gammatolerans (strain DSM 15229 / JCM 11827 / EJ3).